Consider the following 598-residue polypeptide: Potassium voltage-gated channel subfamily A member 5 (598 aa).

The tract at residues 1-89 (MEIALGPLEN…EEGEGDPGLS (89 aa)) is disordered. Residues 1-195 (MEIALGPLEN…FYQLGDEAME (195 aa)) form a tetramerization domain region. Topologically, residues 1 to 231 (MEIALGPLEN…LIFEYPESSG (231 aa)) are cytoplasmic. Residues 60-69 (RPLPPQPPEL) show a composition bias toward pro residues. Residue Lys205 forms a Glycyl lysine isopeptide (Lys-Gly) (interchain with G-Cter in SUMO) linkage. A helical membrane pass occupies residues 232 to 253 (SARAIAIVSVLVILISIITFCL). Residues 254 to 308 (ETLPEFKDERELLRHPPVPHQPPAAPALGANGSGAVAPASGSTVAPLLPRTLADP) lie on the Extracellular side of the membrane. A helical membrane pass occupies residues 309-330 (FFIVETTCVIWFTFELLVRFFA). Cys331 carries S-palmitoyl cysteine lipidation. Over 331–341 (CPSKAEFSRNI) the chain is Cytoplasmic. A helical transmembrane segment spans residues 342 to 362 (MNIIDIVAIFPYFITLGTELA). At 363–380 (EQQPGGGGGGQNGQQAMS) the chain is on the extracellular side. A helical; Voltage-sensor transmembrane segment spans residues 381–401 (LAILRVIRLVRVFRIFKLSRH). The Cytoplasmic portion of the chain corresponds to 402 to 416 (SKGLQILGKTLQASM). The interval 403–416 (KGLQILGKTLQASM) is S4-S5 linker. The helical transmembrane segment at 417-438 (RELGLLIFFLFIGVILFSSAVY) threads the bilayer. Residues 439–452 (FAEADNQGTHFSSI) lie on the Extracellular side of the membrane. The segment at residues 453 to 464 (PDAFWWAVVTMT) is an intramembrane region (helical). A Selectivity filter motif is present at residues 465–470 (TVGYGD). The stretch at 465–472 (TVGYGDMR) is an intramembrane region. The helical transmembrane segment at 480-508 (IVGSLCAIAGVLTIALPVPVIVSNFNYFY) threads the bilayer. Over 509–598 (HRETDHEEQA…CLDTSRETDL (90 aa)) the chain is Cytoplasmic. Residues 517–539 (QAALKEEPGSQSRGTSLDAGGQR) are disordered. Lys521 participates in a covalent cross-link: Glycyl lysine isopeptide (Lys-Gly) (interchain with G-Cter in SUMO). Positions 596-598 (TDL) match the PDZ-binding motif.

The protein belongs to the potassium channel family. A (Shaker) (TC 1.A.1.2) subfamily. Kv1.5/KCNA5 sub-subfamily. Homotetramer and heterotetramer of potassium channel proteins. Interacts with DLG1, which enhances channel currents. Forms a ternary complex with DLG1 and CAV3. Interacts with KCNAB1. Interacts with UBE2I. Interacts with XIRP2; the interaction is required for normal action potential configuration in the heart. Glycosylated. Post-translationally, sumoylated on Lys-205, and Lys-521, preferentially with SUMO3. Sumoylation regulates the voltage sensitivity of the channel.

It localises to the cell membrane. The catalysed reaction is K(+)(in) = K(+)(out). Functionally, voltage-gated potassium channel that mediates transmembrane potassium transport in excitable membranes. Forms tetrameric potassium-selective channels through which potassium ions pass in accordance with their electrochemical gradient. The channel alternates between opened and closed conformations in response to the voltage difference across the membrane. Can form functional homotetrameric channels and heterotetrameric channels that contain variable proportions of KCNA1, KCNA2, KCNA4, KCNA5, and possibly other family members as well; channel properties depend on the type of alpha subunits that are part of the channel. Channel properties are modulated by cytoplasmic beta subunits that regulate the subcellular location of the alpha subunits and promote rapid inactivation. Homotetrameric channels display rapid activation and slow inactivation. Required for normal electrical conduction including formation of the infranodal ventricular conduction system and normal action potential configuration, as a result of its interaction with XIRP2. May play a role in regulating the secretion of insulin in normal pancreatic islets. The chain is Potassium voltage-gated channel subfamily A member 5 (KCNA5) from Oryctolagus cuniculus (Rabbit).